Here is a 195-residue protein sequence, read N- to C-terminus: Probable GTP-binding protein EngB (195 aa).

An EngB-type G domain is found at 22-195 (GRPEVALAGR…WAALLPFLTE (174 aa)). GTP contacts are provided by residues 30–37 (GRSNVGKS), 57–61 (GKTQT), 75–78 (DVPG), 142–145 (TKAD), and 174–176 (FSS). Mg(2+)-binding residues include Ser37 and Thr59.

Belongs to the TRAFAC class TrmE-Era-EngA-EngB-Septin-like GTPase superfamily. EngB GTPase family. Mg(2+) is required as a cofactor.

Necessary for normal cell division and for the maintenance of normal septation. This chain is Probable GTP-binding protein EngB, found in Geobacillus thermodenitrificans (strain NG80-2).